Reading from the N-terminus, the 235-residue chain is Ribonuclease PH (235 aa).

Residues Arg86 and 124–126 (GTR) contribute to the phosphate site.

It belongs to the RNase PH family. Homohexameric ring arranged as a trimer of dimers.

It catalyses the reaction tRNA(n+1) + phosphate = tRNA(n) + a ribonucleoside 5'-diphosphate. Functionally, phosphorolytic 3'-5' exoribonuclease that plays an important role in tRNA 3'-end maturation. Removes nucleotide residues following the 3'-CCA terminus of tRNAs; can also add nucleotides to the ends of RNA molecules by using nucleoside diphosphates as substrates, but this may not be physiologically important. Probably plays a role in initiation of 16S rRNA degradation (leading to ribosome degradation) during starvation. The chain is Ribonuclease PH from Francisella tularensis subsp. tularensis (strain FSC 198).